A 489-amino-acid polypeptide reads, in one-letter code: MDASAAISQLRQGQKPEWPQNANTSDFAKTLDNSSEFPKTLRHEYVVPTKAQLKRKTLNDDAQTAAKASSSDDEGIYFCGNSLGLQPKAVGEYLNAYLKTWGSIAVGSHFTPMADSPLTPFQDMAAECARRMSDIVGASPSEIVAMNTLTINLHLMMAAFYKPTEKKHKIMCEWRPFPSDWYAIESQIEWHGLDPKKSMLLVKPDDGYLMTTESILKLIDQEADELALIMLPGIQYYSGQLLDIPTITTHARKHGITIGWDLAHAAGNVELKLHDWDVDFACWCTYKYMNAGAGAIAGAFVHSKHGDNGSNVGLKGWYGHDKSSRFLMDNKFVPTPGAQGFQCSNPSAVDLTCLAGSLSVFQKTSVADLRSRSLLLTAYAEHLLTQIASRNIKDGNFPFQIISPLDPRFRGAQLSVLLQEDVMEEVFAGLEENGVICDKRKPGIIRVAPVPMYNTFEDVYKFMHILEGALQPKAEQKTQAHGEAVEARL.

A compositionally biased stretch (polar residues) spans 1–12 (MDASAAISQLRQ). The interval 1 to 25 (MDASAAISQLRQGQKPEWPQNANTS) is disordered. Pyridoxal 5'-phosphate contacts are provided by residues L149, T150, 177 to 180 (FPSD), D261, H264, and Y286. Residue K287 is modified to N6-(pyridoxal phosphate)lysine. Pyridoxal 5'-phosphate contacts are provided by W317 and N345.

This sequence belongs to the kynureninase family. As to quaternary structure, homodimer. Requires pyridoxal 5'-phosphate as cofactor.

It localises to the cytoplasm. The enzyme catalyses L-kynurenine + H2O = anthranilate + L-alanine + H(+). It catalyses the reaction 3-hydroxy-L-kynurenine + H2O = 3-hydroxyanthranilate + L-alanine + H(+). Its pathway is amino-acid degradation; L-kynurenine degradation; L-alanine and anthranilate from L-kynurenine: step 1/1. It functions in the pathway cofactor biosynthesis; NAD(+) biosynthesis; quinolinate from L-kynurenine: step 2/3. Catalyzes the cleavage of L-kynurenine (L-Kyn) and L-3-hydroxykynurenine (L-3OHKyn) into anthranilic acid (AA) and 3-hydroxyanthranilic acid (3-OHAA), respectively. The chain is Kynureninase 2 from Phaeosphaeria nodorum (strain SN15 / ATCC MYA-4574 / FGSC 10173) (Glume blotch fungus).